The chain runs to 348 residues: MSDRLTLLRPDDWHIHLRDGAVLPHTVGDVARTFARAIIMPNLVPPVRNAAEAGAYRERILAARPAGSRFEPLMVLYLTDRTSPEDVRAAKASGIVYAAKLYPAGATTNSDSGVTSIDNIFPAIEALAEVGMPLLVHGEVTRSEIDVFDREKRFIDEHMRRVVERFPTLKVVFEHITTSDAAQFVTEAPANVGATITAQHLLYNRNHMLVGGIRPHFYCLPILKRNTHQVALLDAATSGNPKFFLGTDSAPHARHAKEAACGCAGCYTAYAAIEMYAEAFEQRNALDKLEGFASLHGPAFYGLPANTDTITLVREEWTAPDSLPFGEQTVVPLRAGEKLRWRLLEENA.

2 residues coordinate Zn(2+): His14 and His16. Substrate contacts are provided by residues 16–18 and Asn42; that span reads HLR. Zn(2+) contacts are provided by Lys100, His137, and His175. Lys100 carries the N6-carboxylysine modification. Residue His137 participates in substrate binding. Leu220 contributes to the substrate binding site. Asp248 is a binding site for Zn(2+). Asp248 is an active-site residue. Substrate contacts are provided by His252 and Ala264.

This sequence belongs to the metallo-dependent hydrolases superfamily. DHOase family. Class II DHOase subfamily. Homodimer. Zn(2+) serves as cofactor.

The catalysed reaction is (S)-dihydroorotate + H2O = N-carbamoyl-L-aspartate + H(+). It participates in pyrimidine metabolism; UMP biosynthesis via de novo pathway; (S)-dihydroorotate from bicarbonate: step 3/3. In terms of biological role, catalyzes the reversible cyclization of carbamoyl aspartate to dihydroorotate. The chain is Dihydroorotase from Pseudomonas putida (strain GB-1).